Here is a 297-residue protein sequence, read N- to C-terminus: Probable E3 SUMO-protein ligase RNF212 (297 aa).

The RING-type zinc-finger motif lies at 7–46; sequence CNRCFQPPHRTSCFSLTNCGHVYCDACLGKGKKNECLICK. The stretch at 91–124 forms a coiled coil; it reads RKRLLAFYREKISRLEESLRKSVLQIEQLQSMRS.

The protein resides in the nucleus. Its subcellular location is the chromosome. Its pathway is protein modification; protein sumoylation. SUMO E3 ligase that acts as a regulator of crossing-over during meiosis: required to couple chromosome synapsis to the formation of crossover-specific recombination complexes. Localizes to recombination sites and stabilizes meiosis-specific recombination factors, such as MutS-gamma complex proteins (MSH4 and MSH5) and TEX11. May mediate sumoylation of target proteins MSH4 and/or MSH5, leading to enhance their binding to recombination sites. Acts as a limiting factor for crossover designation and/or reinforcement and plays an antagonist role with CCNB1IP1/HEI10 in the regulation of meiotic recombination. This Homo sapiens (Human) protein is Probable E3 SUMO-protein ligase RNF212 (RNF212).